Consider the following 641-residue polypeptide: WW domain-binding protein 11 (641 aa).

Over residues 1 to 11 the composition is skewed to polar residues; it reads MGRRSTSSTKS. Residues 1–37 are disordered; sequence MGRRSTSSTKSGKFMNPTDQARKEARKRELKKNKKQR. The segment at 1-45 is required for nuclear import; the sequence is MGRRSTSSTKSGKFMNPTDQARKEARKRELKKNKKQRMMVRAAVL. Lys13 bears the N6-acetyllysine mark. Residues 28-37 are compositionally biased toward basic residues; that stretch reads RELKKNKKQR. A coiled-coil region spans residues 75-133; it reads EKVLKDKRKKLRETFERILRLYEKENPDIYKELRKLEVEYEQKRAQLSQYFDAVKNAQH. Position 181 is a phosphoserine (Ser181). Residues 186 to 213 are disordered; it reads LGHGVPRLPPGRKPPGPPPGPPPPQVVQ. Position 192 is an omega-N-methylarginine (Arg192). The span at 192-210 shows a compositional bias: pro residues; the sequence is RLPPGRKPPGPPPGPPPPQ. The tract at residues 217–221 is interaction with PP1; sequence RKVGF. The residue at position 236 (Tyr236) is a Phosphotyrosine. The segment at 236–552 is disordered; sequence YSPELAQRGH…RPKADDTSAA (317 aa). A Phosphoserine modification is found at Ser237. Positions 253 to 263 are enriched in acidic residues; sequence SEDDGYPEDMD. Residues 276 to 304 are compositionally biased toward basic and acidic residues; sequence TDKSDGESDGDEFVHRDNGERDNNEEKKS. A phosphoserine mark is found at Ser279 and Ser283. Positions 306–310 are interaction with PP1; that stretch reads LSVRF. Acidic residues predominate over residues 351–365; that stretch reads EFSEDDDEDDSDDSE. Phosphoserine occurs at positions 353, 361, and 364. Residues 366–380 are compositionally biased toward basic and acidic residues; the sequence is AEKQSQKQHKEESHS. Low complexity predominate over residues 386–404; that stretch reads ASSQQQAPPQSVPPSQIQA. Composition is skewed to pro residues over residues 405-447, 456-504, and 510-530; these read PPMP…PPGM, RLLP…PPRP, and PLVPPLGPAPPGLFPPAPLPN. The PGR motif lies at 455–466; it reads PRLLPPGPPPGR. Lys557 is covalently cross-linked (Glycyl lysine isopeptide (Lys-Gly) (interchain with G-Cter in SUMO2)). Lys565 carries the N6-acetyllysine modification. Residue Lys572 forms a Glycyl lysine isopeptide (Lys-Gly) (interchain with G-Cter in SUMO2) linkage. The interval 587 to 623 is disordered; that stretch reads RENKGATAAPQRKSEDDSAVPLAKAAPKSGPSVPVSV. Ser600 carries the phosphoserine modification.

Interacts with PPP1CA, PPP1CB and PPP1CC. Interacts via the PGR motif with PQBP1 in the nucleus. Interacts with the WW domains of WBP4. Ubiquitous. Highly expressed in the heart, pancreas, kidney skeletal muscle, placenta and brain (at protein level). Weakly expressed in liver and lung.

The protein resides in the nucleus. It localises to the cytoplasm. In terms of biological role, activates pre-mRNA splicing. May inhibit PP1 phosphatase activity. This is WW domain-binding protein 11 from Homo sapiens (Human).